The sequence spans 502 residues: Chromosomal replication initiator protein DnaA (502 aa).

Positions 1-112 are domain I, interacts with DnaA modulators; that stretch reads MADDLSLGFT…PSTDHIDDNS (112 aa). The segment at 113–161 is domain II; that stretch reads SSADVLLTDDCGTDTDENYGEPLTGEYQGLPTYFTERPHHTESTVTGGT. Residues 162-378 form a domain III, AAA+ region region; that stretch reads SLNRRYTFET…GALIRVTAFA (217 aa). ATP contacts are provided by glycine 206, glycine 208, lysine 209, and threonine 210. The tract at residues 379–502 is domain IV, binds dsDNA; it reads SLNKTAIDKA…TTRIRQRSKR (124 aa).

Belongs to the DnaA family. As to quaternary structure, oligomerizes as a right-handed, spiral filament on DNA at oriC.

It is found in the cytoplasm. Its function is as follows. Plays an essential role in the initiation and regulation of chromosomal replication. ATP-DnaA binds to the origin of replication (oriC) to initiate formation of the DNA replication initiation complex once per cell cycle. Binds the DnaA box (a 9 base pair repeat at the origin) and separates the double-stranded (ds)DNA. Forms a right-handed helical filament on oriC DNA; dsDNA binds to the exterior of the filament while single-stranded (ss)DNA is stabiized in the filament's interior. The ATP-DnaA-oriC complex binds and stabilizes one strand of the AT-rich DNA unwinding element (DUE), permitting loading of DNA polymerase. After initiation quickly degrades to an ADP-DnaA complex that is not apt for DNA replication. Binds acidic phospholipids. The protein is Chromosomal replication initiator protein DnaA of Mycobacterium leprae (strain TN).